A 308-amino-acid chain; its full sequence is Aspartate carbamoyltransferase catalytic subunit (308 aa).

The carbamoyl phosphate site is built by Arg57 and Thr58. Lys86 lines the L-aspartate pocket. Carbamoyl phosphate contacts are provided by Arg107, His135, and Gln138. Residues Arg167 and Arg228 each contribute to the L-aspartate site. Residues Leu267 and Pro268 each coordinate carbamoyl phosphate.

The protein belongs to the aspartate/ornithine carbamoyltransferase superfamily. ATCase family. As to quaternary structure, heterooligomer of catalytic and regulatory chains.

The enzyme catalyses carbamoyl phosphate + L-aspartate = N-carbamoyl-L-aspartate + phosphate + H(+). It functions in the pathway pyrimidine metabolism; UMP biosynthesis via de novo pathway; (S)-dihydroorotate from bicarbonate: step 2/3. Catalyzes the condensation of carbamoyl phosphate and aspartate to form carbamoyl aspartate and inorganic phosphate, the committed step in the de novo pyrimidine nucleotide biosynthesis pathway. In Methanosarcina barkeri (strain Fusaro / DSM 804), this protein is Aspartate carbamoyltransferase catalytic subunit.